The chain runs to 422 residues: Ferrochelatase, mitochondrial (422 aa).

The N-terminal 53 residues, 1 to 53 (MLSASANMAAALRAAGALLREPLVHGSSRACQPWRCQSGAAVAATTEKVHHAK), are a transit peptide targeting the mitochondrion. K56 carries the post-translational modification N6-acetyllysine. Protoporphyrin IX contacts are provided by R114, Y122, and S129. K137 bears the N6-succinyllysine mark. C195 serves as a coordination point for [2Fe-2S] cluster. Residue H229 is part of the active site. K289 carries the post-translational modification N6-acetyllysine; alternate. K289 is subject to N6-succinyllysine; alternate. D382 is an active-site residue. Residues C402, C405, and C410 each coordinate [2Fe-2S] cluster. N6-acetyllysine; alternate is present on K414. K414 is subject to N6-succinyllysine; alternate.

The protein belongs to the ferrochelatase family. As to quaternary structure, homodimer. Homotetramer. Interaction with PGRMC1; the interaction results in decreased FECH activity. Interacts with ABCB10 and SLC25A37; this interaction forms an oligomeric complex. Forms a complex with ABCB7 and ABCB10, where a dimeric FECH bridges ABCB7 and ABCB10 homodimers; this complex may be required for cellular iron homeostasis, mitochondrial function and heme biosynthesis. Interacts with ABCB7 and ABCB10. [2Fe-2S] cluster serves as cofactor. In terms of tissue distribution, erythroid and hepatic cells.

It localises to the mitochondrion inner membrane. It carries out the reaction heme b + 2 H(+) = protoporphyrin IX + Fe(2+). It functions in the pathway porphyrin-containing compound metabolism; protoheme biosynthesis; protoheme from protoporphyrin-IX: step 1/1. In terms of biological role, catalyzes the ferrous insertion into protoporphyrin IX. In Mus musculus (Mouse), this protein is Ferrochelatase, mitochondrial.